Consider the following 277-residue polypeptide: Putative phosphoenolpyruvate synthase regulatory protein (277 aa).

157 to 164 (GVSRCGKT) contacts ADP.

This sequence belongs to the pyruvate, phosphate/water dikinase regulatory protein family. PSRP subfamily.

The enzyme catalyses [pyruvate, water dikinase] + ADP = [pyruvate, water dikinase]-phosphate + AMP + H(+). It catalyses the reaction [pyruvate, water dikinase]-phosphate + phosphate + H(+) = [pyruvate, water dikinase] + diphosphate. Its function is as follows. Bifunctional serine/threonine kinase and phosphorylase involved in the regulation of the phosphoenolpyruvate synthase (PEPS) by catalyzing its phosphorylation/dephosphorylation. This Enterobacter sp. (strain 638) protein is Putative phosphoenolpyruvate synthase regulatory protein.